Consider the following 569-residue polypeptide: Sugar transporter STL1 (569 aa).

Topologically, residues 1–29 (MKDLKLSNFKGKFISRTSHWGLTGKKLRY) are cytoplasmic. A helical transmembrane segment spans residues 30-50 (FITIASMTGFSLFGYDQGLMA). The Extracellular portion of the chain corresponds to 51-79 (SLITGKQFNYEFPATKENGDHDRHATVVQ). Residues 80-100 (GATTSCYELGCFAGSLFVMFC) form a helical membrane-spanning segment. At 101-107 (GERIGRK) the chain is on the cytoplasmic side. Residues 108 to 128 (PLILMGSVITIIGAVISTCAF) form a helical membrane-spanning segment. Residue arginine 129 is a topological domain, extracellular. Residues 130-150 (GYWALGQFIIGRVVTGVGTGL) form a helical membrane-spanning segment. The Cytoplasmic portion of the chain corresponds to 151 to 168 (NTSTIPVWQSEMSKAENR). The chain crosses the membrane as a helical span at residues 169-189 (GLLVNLEGSTIAFGTMIAYWI). Topologically, residues 190-203 (DFGLSYTNSSVQWR) are extracellular. Asparagine 197 is a glycosylation site (N-linked (GlcNAc...) asparagine). Residues 204–224 (FPVSMQIVFALFLLAFMIKLP) form a helical membrane-spanning segment. Over 225–291 (ESPRWLISQS…SRGRSQNLQR (67 aa)) the chain is Cytoplasmic. The helical transmembrane segment at 292–312 (ALIAASTQFFQQFTGCNAAIY) threads the bilayer. At 313 to 330 (YSTVLFNKTIKLDYRLSM) the chain is on the extracellular side. Asparagine 319 carries N-linked (GlcNAc...) asparagine glycosylation. The helical transmembrane segment at 331–351 (IIGGVFATIYALSTIGSFFLI) threads the bilayer. Residues 352 to 358 (EKLGRRK) are Cytoplasmic-facing. Residues 359–379 (LFLLGATGQAVSFTITFACLV) traverse the membrane as a helical segment. Residues 380-389 (KENKENARGA) lie on the Extracellular side of the membrane. Residues 390–410 (AVGLFLFITFFGLSLLSLPWI) traverse the membrane as a helical segment. Residues 411-426 (YPPEIASMKVRASTNA) are Cytoplasmic-facing. The chain crosses the membrane as a helical span at residues 427–447 (FSTCTNWLCNFAVVMFTPIFI). The Extracellular portion of the chain corresponds to 448-453 (GQSGWG). The chain crosses the membrane as a helical span at residues 454 to 474 (CYLFFAVMNYLYIPVIFFFYP). At 475 to 569 (ETAGRSLEEI…TVNDKANFEG (95 aa)) the chain is on the cytoplasmic side. Over residues 524–533 (DDEMEKEDFG) the composition is skewed to acidic residues. The interval 524–569 (DDEMEKEDFGEDRVEDTYNQINGDNSSSSSNIKNEDTVNDKANFEG) is disordered. Positions 556–569 (KNEDTVNDKANFEG) are enriched in basic and acidic residues.

This sequence belongs to the major facilitator superfamily. Sugar transporter (TC 2.A.1.1) family.

The protein resides in the membrane. This chain is Sugar transporter STL1 (STL1), found in Saccharomyces cerevisiae (strain ATCC 204508 / S288c) (Baker's yeast).